Reading from the N-terminus, the 351-residue chain is DNA polymerase IV (351 aa).

The region spanning I4–G185 is the UmuC domain. Mg(2+)-binding residues include D8 and D103. Residue E104 is part of the active site.

It belongs to the DNA polymerase type-Y family. As to quaternary structure, monomer. The cofactor is Mg(2+).

It localises to the cytoplasm. It carries out the reaction DNA(n) + a 2'-deoxyribonucleoside 5'-triphosphate = DNA(n+1) + diphosphate. Poorly processive, error-prone DNA polymerase involved in untargeted mutagenesis. Copies undamaged DNA at stalled replication forks, which arise in vivo from mismatched or misaligned primer ends. These misaligned primers can be extended by PolIV. Exhibits no 3'-5' exonuclease (proofreading) activity. May be involved in translesional synthesis, in conjunction with the beta clamp from PolIII. This Shigella dysenteriae serotype 1 (strain Sd197) protein is DNA polymerase IV.